The sequence spans 193 residues: NAD(P)H-quinone oxidoreductase subunit J (193 aa).

Residues 1 to 21 (MSDSAPTNPTPTNPAPEESAS) form a disordered region.

This sequence belongs to the complex I 30 kDa subunit family. NDH-1 can be composed of about 15 different subunits; different subcomplexes with different compositions have been identified which probably have different functions.

It is found in the cellular thylakoid membrane. It carries out the reaction a plastoquinone + NADH + (n+1) H(+)(in) = a plastoquinol + NAD(+) + n H(+)(out). The enzyme catalyses a plastoquinone + NADPH + (n+1) H(+)(in) = a plastoquinol + NADP(+) + n H(+)(out). Its function is as follows. NDH-1 shuttles electrons from an unknown electron donor, via FMN and iron-sulfur (Fe-S) centers, to quinones in the respiratory and/or the photosynthetic chain. The immediate electron acceptor for the enzyme in this species is believed to be plastoquinone. Couples the redox reaction to proton translocation, and thus conserves the redox energy in a proton gradient. Cyanobacterial NDH-1 also plays a role in inorganic carbon-concentration. The sequence is that of NAD(P)H-quinone oxidoreductase subunit J from Synechococcus sp. (strain CC9902).